A 110-amino-acid polypeptide reads, in one-letter code: Large ribosomal subunit protein P2C (110 aa).

The tract at residues 83 to 110 (APAAEEAAKEEAKEEEESDEDMGFGLFD) is disordered. Residues 95–104 (KEEEESDEDM) are compositionally biased toward acidic residues. Serine 100 bears the Phosphoserine mark.

The protein belongs to the eukaryotic ribosomal protein P1/P2 family. In terms of assembly, component of the large ribosomal subunit (LSU). Mature yeast ribosomes consist of a small (40S) and a large (60S) subunit. The 40S small subunit contains 1 molecule of ribosomal RNA (18S rRNA) and at least 33 different proteins. The large 60S subunit contains 3 rRNA molecules (25S, 5.8S and 5S rRNA) and at least 46 different proteins. The acidic ribosomal P-proteins form the stalk structure of the 60S subunit. They are organized as a pentameric complex in which uL10/P0 interacts with 2 heterodimers of P1 and P2 proteins.

Its subcellular location is the cytoplasm. Its function is as follows. Component of the ribosome, a large ribonucleoprotein complex responsible for the synthesis of proteins in the cell. The small ribosomal subunit (SSU) binds messenger RNAs (mRNAs) and translates the encoded message by selecting cognate aminoacyl-transfer RNA (tRNA) molecules. The large subunit (LSU) contains the ribosomal catalytic site termed the peptidyl transferase center (PTC), which catalyzes the formation of peptide bonds, thereby polymerizing the amino acids delivered by tRNAs into a polypeptide chain. The nascent polypeptides leave the ribosome through a tunnel in the LSU and interact with protein factors that function in enzymatic processing, targeting, and the membrane insertion of nascent chains at the exit of the ribosomal tunnel. The polypeptide is Large ribosomal subunit protein P2C (rpp203) (Schizosaccharomyces pombe (strain 972 / ATCC 24843) (Fission yeast)).